The following is a 101-amino-acid chain: Interleukin-8 (101 aa).

Positions 1 to 22 (MNSKLAVALLATFLLSLTLCEA) are cleaved as a signal peptide. Arg27 is modified (citrulline). Intrachain disulfides connect Cys34/Cys61 and Cys36/Cys77.

Belongs to the intercrine alpha (chemokine CxC) family. In terms of assembly, homodimer. Interacts with TNFAIP6 (via Link domain); this interaction interferes with chemokine binding to glycosaminoglycans. Citrullination at Arg-27 prevents proteolysis, and dampens tissue inflammation, it also enhances leukocytosis, possibly through impaired chemokine clearance from the blood circulation.

The protein localises to the secreted. Functionally, chemotactic factor that mediates inflammatory response by attracting neutrophils, basophils, and T-cells to clear pathogens and protect the host from infection. Also plays an important role in neutrophil activation. Released in response to an inflammatory stimulus, exerts its effect by binding to the G-protein-coupled receptors CXCR1 and CXCR2, primarily found in neutrophils, monocytes and endothelial cells. G-protein heterotrimer (alpha, beta, gamma subunits) constitutively binds to CXCR1/CXCR2 receptor and activation by IL8 leads to beta and gamma subunits release from Galpha (GNAI2 in neutrophils) and activation of several downstream signaling pathways including PI3K and MAPK pathways. This Oryctolagus cuniculus (Rabbit) protein is Interleukin-8 (CXCL8).